Here is a 193-residue protein sequence, read N- to C-terminus: Activity-regulated cytoskeleton associated protein 2 (193 aa).

It belongs to the ARC/ARG3.1 family. Homooligomer; homooligomerizes into virion-like capsids.

It is found in the extracellular vesicle membrane. Functionally, self-assembles into virion-like capsids that encapsulate RNAs and mediate intercellular RNA transfer. Arc2 protein is released from cells in extracellular vesicles that mediate the transfer of mRNA into neighboring cells. The chain is Activity-regulated cytoskeleton associated protein 2 from Drosophila melanogaster (Fruit fly).